We begin with the raw amino-acid sequence, 102 residues long: Small ribosomal subunit protein uS10 (102 aa).

It belongs to the universal ribosomal protein uS10 family. In terms of assembly, part of the 30S ribosomal subunit.

In terms of biological role, involved in the binding of tRNA to the ribosomes. This is Small ribosomal subunit protein uS10 from Chelativorans sp. (strain BNC1).